Reading from the N-terminus, the 81-residue chain is RNA-binding protein Hfq (81 aa).

Positions 11 to 71 (DIFLNSARKN…VSTITPLRPI (61 aa)) constitute a Sm domain.

The protein belongs to the Hfq family. As to quaternary structure, homohexamer.

RNA chaperone that binds small regulatory RNA (sRNAs) and mRNAs to facilitate mRNA translational regulation in response to envelope stress, environmental stress and changes in metabolite concentrations. Also binds with high specificity to tRNAs. The chain is RNA-binding protein Hfq from Clostridium acetobutylicum (strain ATCC 824 / DSM 792 / JCM 1419 / IAM 19013 / LMG 5710 / NBRC 13948 / NRRL B-527 / VKM B-1787 / 2291 / W).